Here is a 115-residue protein sequence, read N- to C-terminus: uncharacterized protein (115 aa).

This is an uncharacterized protein from Acidianus filamentous virus 1 (isolate United States/Yellowstone) (AFV-1).